A 188-amino-acid chain; its full sequence is F-box only protein 36 (188 aa).

The F-box domain maps to 91 to 137 (FDFLERLSDDLLLNIISYLDLEDIARLCQTSHRFAKLCMSDKLWEQI).

Directly interacts with SKP1 and CUL1.

Its function is as follows. Substrate-recognition component of the SCF (SKP1-CUL1-F-box protein)-type E3 ubiquitin ligase complex. This chain is F-box only protein 36 (FBXO36), found in Pongo abelii (Sumatran orangutan).